The primary structure comprises 420 residues: Gamma-glutamyl phosphate reductase 2 (420 aa).

This sequence belongs to the gamma-glutamyl phosphate reductase family.

It is found in the cytoplasm. It carries out the reaction L-glutamate 5-semialdehyde + phosphate + NADP(+) = L-glutamyl 5-phosphate + NADPH + H(+). It functions in the pathway amino-acid biosynthesis; L-proline biosynthesis; L-glutamate 5-semialdehyde from L-glutamate: step 2/2. In terms of biological role, catalyzes the NADPH-dependent reduction of L-glutamate 5-phosphate into L-glutamate 5-semialdehyde and phosphate. The product spontaneously undergoes cyclization to form 1-pyrroline-5-carboxylate. The polypeptide is Gamma-glutamyl phosphate reductase 2 (Synechocystis sp. (strain ATCC 27184 / PCC 6803 / Kazusa)).